A 286-amino-acid chain; its full sequence is ATP synthase gamma chain (286 aa).

This sequence belongs to the ATPase gamma chain family. F-type ATPases have 2 components, CF(1) - the catalytic core - and CF(0) - the membrane proton channel. CF(1) has five subunits: alpha(3), beta(3), gamma(1), delta(1), epsilon(1). CF(0) has three main subunits: a, b and c.

It is found in the cell inner membrane. Produces ATP from ADP in the presence of a proton gradient across the membrane. The gamma chain is believed to be important in regulating ATPase activity and the flow of protons through the CF(0) complex. In Flavobacterium psychrophilum (strain ATCC 49511 / DSM 21280 / CIP 103535 / JIP02/86), this protein is ATP synthase gamma chain.